The primary structure comprises 86 residues: Large ribosomal subunit protein bL27 (86 aa).

The disordered stretch occupies residues 1–31 (MAHKKAGGSSRNGRDSAGQRRGVKKFGGEPV).

This sequence belongs to the bacterial ribosomal protein bL27 family.

In Desulfotalea psychrophila (strain LSv54 / DSM 12343), this protein is Large ribosomal subunit protein bL27.